A 2465-amino-acid chain; its full sequence is Serine/threonine-protein kinase TOR (2465 aa).

11 HEAT repeats span residues 184–221, 271–308, 348–389, 549–587, 588–625, 717–755, 761–799, 888–926, 981–1018, 1022–1059, and 1061–1098; these read VHVPEFVDAIWVALRDPKQAVRERAVEALRACLHVIEK, SRYREVADIVLNYLRHRDQLVRRSITSLLPRIAHFLRD, AELV…AMGP, RLVEEIVEKLLMAAVADADVGVRSSVFKALYRNPSFDDF, LAQADIMTSIFVALNDEEYHVRELAISVAGRLSEKNPA, QYLPELMPLVVDALLDGGAVSKREVAVATLGQVIQSTGY, NEYPPLLGLLLKLLNGELEWSTRLEVLKVLGIMGALDPH, PYLPKVLPELFRAVRMCEDGGLKEFITWKLGTLVSIVRQ, MYILHILPSCIQVLGDAERCNDYYYVPDILHTLEVFGG, EHMHLVAPVLVRLFKVELVDIRRRAIVTLTKLIPTVQV, and THVSVLVHHLKLVLDGNNDDLRKDAAEALCCLAHALGE. Positions 1158–1191 are disordered; sequence DFGGVPSEEADETQRQPRSHQVNDVRLRSAGEAS. The FAT domain maps to 1297-1877; the sequence is LLGALAEKCR…MYPLLVACKS (581 aa). A PI3K/PI4K catalytic domain is found at 2051–2369; sequence FVPQLIVITS…PPRGAREREL (319 aa). Residues 2057 to 2063 are G-loop; it reads VITSKQR. The catalytic loop stretch occupies residues 2230–2238; that stretch reads GLGDRHPSN. The activation loop stretch occupies residues 2250 to 2275; the sequence is HIDFGDCFEASMNREKFPEKVPFRLT. Residues 2401–2431 form a disordered region; sequence RDFSSGSSLSGAGSSTQHGNEHLASGDTREV. Residues 2404 to 2415 show a composition bias toward low complexity; the sequence is SSGSSLSGAGSS. The FATC domain maps to 2433–2465; it reads PGLSVKVQVQRLILQATSHENLCQNYVGWCPFW.

It belongs to the PI3/PI4-kinase family. The target of rapamycin complex 1 (TORC1) is composed of at least RAPTOR, LST8 and TOR.

It catalyses the reaction L-seryl-[protein] + ATP = O-phospho-L-seryl-[protein] + ADP + H(+). The catalysed reaction is L-threonyl-[protein] + ATP = O-phospho-L-threonyl-[protein] + ADP + H(+). Insensitive to inhibition by rapamycin. In terms of biological role, component of TORC1 complex, which is an essential cell growth regulator that controls plant development. Acts through the phosphorylation of downstream effectors that are recruited by the binding partner RAPTOR. Acts by activating transcription, protein synthesis and ribosome biogenesis, and inhibiting mRNA degradation and autophagy. The protein is Serine/threonine-protein kinase TOR of Oryza sativa subsp. japonica (Rice).